The sequence spans 360 residues: Photosystem II protein D1 (360 aa).

The next 3 membrane-spanning stretches (helical) occupy residues 30–47, 119–134, and 143–157; these read YVGWFGVLMIPCLLAAAA, HFLIGISAYMGRQWEL, and WICVAYSAPVSAAFA. Histidine 119 is a chlorophyll a binding site. Tyrosine 127 is a binding site for pheophytin a. The [CaMn4O5] cluster site is built by aspartate 171 and glutamate 190. The helical transmembrane segment at 198–219 threads the bilayer; the sequence is FHMAGVAGMFGGSLFSAMHGSL. Residue histidine 199 coordinates chlorophyll a. Residues histidine 216 and 265-266 contribute to the a quinone site; that span reads SF. Histidine 216 contacts Fe cation. Histidine 273 is a binding site for Fe cation. A helical transmembrane segment spans residues 275–289; the sequence is FLAVFPVVCVWLTSM. Residues histidine 333, glutamate 334, aspartate 343, and alanine 345 each coordinate [CaMn4O5] cluster. The propeptide occupies 346–360; the sequence is AAESTTVALTAPAIG.

The protein belongs to the reaction center PufL/M/PsbA/D family. PSII is composed of 1 copy each of membrane proteins PsbA, PsbB, PsbC, PsbD, PsbE, PsbF, PsbH, PsbI, PsbJ, PsbK, PsbL, PsbM, PsbT, PsbX, PsbY, Psb30/Ycf12, peripheral proteins PsbO, CyanoQ (PsbQ), PsbU, PsbV and a large number of cofactors. It forms dimeric complexes. The D1/D2 heterodimer binds P680, chlorophylls that are the primary electron donor of PSII, and subsequent electron acceptors. It shares a non-heme iron and each subunit binds pheophytin, quinone, additional chlorophylls, carotenoids and lipids. D1 provides most of the ligands for the Mn4-Ca-O5 cluster of the oxygen-evolving complex (OEC). There is also a Cl(-1) ion associated with D1 and D2, which is required for oxygen evolution. The PSII complex binds additional chlorophylls, carotenoids and specific lipids. is required as a cofactor. Post-translationally, tyr-162 forms a radical intermediate that is referred to as redox-active TyrZ, YZ or Y-Z. C-terminally processed by CtpA; processing is essential to allow assembly of the oxygen-evolving complex and thus photosynthetic growth.

The protein localises to the cellular thylakoid membrane. It carries out the reaction 2 a plastoquinone + 4 hnu + 2 H2O = 2 a plastoquinol + O2. Its function is as follows. Photosystem II (PSII) is a light-driven water:plastoquinone oxidoreductase that uses light energy to abstract electrons from H(2)O, generating O(2) and a proton gradient subsequently used for ATP formation. It consists of a core antenna complex that captures photons, and an electron transfer chain that converts photonic excitation into a charge separation. The D1/D2 (PsbA/PsbD) reaction center heterodimer binds P680, the primary electron donor of PSII as well as several subsequent electron acceptors. In Prochlorococcus marinus (strain MIT 9515), this protein is Photosystem II protein D1.